The following is a 398-amino-acid chain: Cytochrome b (398 aa).

The next 4 helical transmembrane spans lie at 38 to 58 (FGSL…FLAM), 82 to 104 (WLLR…LHIF), 119 to 139 (VWCL…IGYV), and 185 to 205 (FFSL…LHLA). H88 and H102 together coordinate heme b. Positions 189 and 203 each coordinate heme b. A ubiquinone is bound at residue H208. 4 helical membrane-spanning segments follow: residues 231–251 (FYVK…IWIF), 295–315 (AGGV…PFFK), 327–347 (IYQG…WIGC), and 354–373 (FVTI…AITP).

It belongs to the cytochrome b family. The main subunits of complex b-c1 are: cytochrome b, cytochrome c1 and the Rieske protein. Heme b serves as cofactor.

Its subcellular location is the mitochondrion inner membrane. Component of the ubiquinol-cytochrome c reductase complex (complex III or cytochrome b-c1 complex) that is part of the mitochondrial respiratory chain. The b-c1 complex mediates electron transfer from ubiquinol to cytochrome c. Contributes to the generation of a proton gradient across the mitochondrial membrane that is then used for ATP synthesis. This is Cytochrome b (MT-CYB) from Triticum aestivum (Wheat).